The primary structure comprises 852 residues: Thrombospondin type-1 domain-containing protein 1 (852 aa).

Positions M1–A24 are cleaved as a signal peptide. Topologically, residues E25–N413 are extracellular. 7 N-linked (GlcNAc...) asparagine glycosylation sites follow: N39, N53, N58, N69, N80, N135, and N304. The 54-residue stretch at T340–A393 folds into the TSP type-1 domain. Intrachain disulfides connect C352–C387, C356–C392, and C367–C377. The helical transmembrane segment at I414 to T434 threads the bilayer. The Cytoplasmic segment spans residues L435–I852. 2 disordered regions span residues K444–Q517 and L624–K799. Residue S463 is modified to Phosphoserine. Residues A645 to A654 show a composition bias toward basic residues. Basic and acidic residues predominate over residues S655–S669. Over residues M670–T685 the composition is skewed to polar residues. The span at R686–R696 shows a compositional bias: basic and acidic residues. Polar residues-rich tracts occupy residues S766–I778 and Q785–Q794.

In terms of assembly, part of a complex composed of THSD1, PTK2/FAK1, TLN1 and VCL. Interacts with TLN1.

Its subcellular location is the endosome membrane. The protein resides in the cell junction. It is found in the focal adhesion. The protein localises to the membrane. It localises to the secreted. Its function is as follows. Is a positive regulator of nascent focal adhesion assembly, involved in the modulation of endothelial cell attachment to the extracellular matrix. The polypeptide is Thrombospondin type-1 domain-containing protein 1 (THSD1) (Homo sapiens (Human)).